A 416-amino-acid polypeptide reads, in one-letter code: tRNA(Met) cytidine acetate ligase (416 aa).

ATP-binding positions include 7–20 (VAEY…HLYL), Gly102, Asn166, and Arg191.

Belongs to the TmcAL family.

Its subcellular location is the cytoplasm. It catalyses the reaction cytidine(34) in elongator tRNA(Met) + acetate + ATP = N(4)-acetylcytidine(34) in elongator tRNA(Met) + AMP + diphosphate. Catalyzes the formation of N(4)-acetylcytidine (ac(4)C) at the wobble position of elongator tRNA(Met), using acetate and ATP as substrates. First activates an acetate ion to form acetyladenylate (Ac-AMP) and then transfers the acetyl group to tRNA to form ac(4)C34. The sequence is that of tRNA(Met) cytidine acetate ligase from Syntrophomonas wolfei subsp. wolfei (strain DSM 2245B / Goettingen).